The sequence spans 269 residues: Undecaprenyl-diphosphatase (269 aa).

A run of 7 helical transmembrane segments spans residues 40–59, 87–107, 116–136, 160–180, 188–208, 220–240, and 247–267; these read GITFDVALHLGTLIALALYF, WYIIAGCVPAAIVGKTLEEPI, AIIAAFLIGFGLLLALADTLG, ALLPGVSRSGITITAALFLGF, FSFLLSLPIVAGAALLKVGHL, PLLIGVGVSAVFGYVSVALLL, and SLYPFVWYRLLAGAGVLLFIF.

This sequence belongs to the UppP family.

It is found in the cell inner membrane. It catalyses the reaction di-trans,octa-cis-undecaprenyl diphosphate + H2O = di-trans,octa-cis-undecaprenyl phosphate + phosphate + H(+). Its function is as follows. Catalyzes the dephosphorylation of undecaprenyl diphosphate (UPP). Confers resistance to bacitracin. This is Undecaprenyl-diphosphatase from Geobacter metallireducens (strain ATCC 53774 / DSM 7210 / GS-15).